The following is an 88-amino-acid chain: MAHSRSAKKRIETIRKRTERNKSAKSALKTAIRRFEEAVQGDDKEQAREKLQKALVSIDKGVSKGILHKNTAARRKSRLTKKFNIITG.

This sequence belongs to the bacterial ribosomal protein bS20 family.

Functionally, binds directly to 16S ribosomal RNA. This chain is Small ribosomal subunit protein bS20, found in Desulforudis audaxviator (strain MP104C).